A 127-amino-acid polypeptide reads, in one-letter code: Fluoride-specific ion channel FluC (127 aa).

The next 4 helical transmembrane spans lie at 4–24 (SLLAIGLGAMVGAWLRWGLGM), 35–55 (PGTLLANLIGGYIIGLAIAFF), 68–88 (LLITGFCGGLTTFSTFSAEVV), and 96–116 (ILWALGSIALHVSGSLLMTAA). Na(+)-binding residues include G75 and T78.

The protein belongs to the fluoride channel Fluc/FEX (TC 1.A.43) family.

Its subcellular location is the cell inner membrane. It carries out the reaction fluoride(in) = fluoride(out). Na(+) is not transported, but it plays an essential structural role and its presence is essential for fluoride channel function. In terms of biological role, fluoride-specific ion channel. Important for reducing fluoride concentration in the cell, thus reducing its toxicity. The protein is Fluoride-specific ion channel FluC of Pseudomonas putida (strain W619).